We begin with the raw amino-acid sequence, 216 residues long: Holliday junction branch migration complex subunit RuvA (216 aa).

The domain I stretch occupies residues 1 to 64 (MISFIKGVLI…EDAQQLYGFK (64 aa)). Positions 65–143 (SKVDKKVFQE…KMANEIYAQT (79 aa)) are domain II. A flexible linker region spans residues 144–163 (SGTTTTSQDSQAQQAPTSVV). Residues 164–216 (LANSIFNESVDALLALGYKQKDAEKMARSAMGDATTAAEVIRKALQGSIKSKR) form a domain III region.

The protein belongs to the RuvA family. As to quaternary structure, homotetramer. Forms an RuvA(8)-RuvB(12)-Holliday junction (HJ) complex. HJ DNA is sandwiched between 2 RuvA tetramers; dsDNA enters through RuvA and exits via RuvB. An RuvB hexamer assembles on each DNA strand where it exits the tetramer. Each RuvB hexamer is contacted by two RuvA subunits (via domain III) on 2 adjacent RuvB subunits; this complex drives branch migration. In the full resolvosome a probable DNA-RuvA(4)-RuvB(12)-RuvC(2) complex forms which resolves the HJ.

The protein resides in the cytoplasm. Its function is as follows. The RuvA-RuvB-RuvC complex processes Holliday junction (HJ) DNA during genetic recombination and DNA repair, while the RuvA-RuvB complex plays an important role in the rescue of blocked DNA replication forks via replication fork reversal (RFR). RuvA specifically binds to HJ cruciform DNA, conferring on it an open structure. The RuvB hexamer acts as an ATP-dependent pump, pulling dsDNA into and through the RuvAB complex. HJ branch migration allows RuvC to scan DNA until it finds its consensus sequence, where it cleaves and resolves the cruciform DNA. The protein is Holliday junction branch migration complex subunit RuvA of Francisella tularensis subsp. tularensis (strain WY96-3418).